Reading from the N-terminus, the 414-residue chain is Methanesulfonate monooxygenase hydroxylase subunit alpha (414 aa).

The region spanning 44–163 (WVPFRHESEL…CEVKFGGFVW (120 aa)) is the Rieske domain. C86, H88, C115, and H118 together coordinate [2Fe-2S] cluster. H225 contributes to the Fe cation binding site.

It belongs to the bacterial ring-hydroxylating dioxygenase alpha subunit family. As to quaternary structure, the MSA monooxygenase system consists of 4 proteins: the 2 subunits of the hydroxylase component (MsmA and MsmB), a ferredoxin (MsmC) and a ferredoxin reductase (MsmD). The hydroxylase component consists of a 3 alpha (MsmA) and 3 beta (MsmB) subunits. Requires [2Fe-2S] cluster as cofactor. It depends on Fe cation as a cofactor.

The protein resides in the cytoplasm. It catalyses the reaction methanesulfonate + NADH + O2 = sulfite + formaldehyde + NAD(+) + H2O. MSAMO is inhibited by metal chelators (such as bathophenanthroline, bathocuprione, neocuprione, alpha-alpha-dipyridil and sodium EDTA) and by sodium azide, sodium arsenate and potassium cyanide. In terms of biological role, methanesulfonate monooxygenase (MSAMO) mediates the primary degradation of methanesulfonic acid (MSA) to produce formaldehyd and inorganic sulfite by initial hydroxylation of the carbon atom prior to spontaneous cleavage of the unstable hydroxymethanesulfonic acid. MSAMO has a restricted substrate range that includes only the short-chain aliphatic sulfonates (methane- to butanesulfonate) and excludes all larger molecules, such as arylsulfonates and aromatic sulfonates. All MSAMO components are required for enzyme activity. The protein is Methanesulfonate monooxygenase hydroxylase subunit alpha of Methylosulfonomonas methylovora.